Consider the following 414-residue polypeptide: tRNA N6-adenosine threonylcarbamoyltransferase, mitochondrial (414 aa).

The N-terminal 29 residues, 1–29 (MLMLSKTAGAIPRPPRSNVRGFIRRFNVQ), are a transit peptide targeting the mitochondrion. 2 positions are modified to N6-acetyllysine: lysine 74 and lysine 140. The a divalent metal cation site is built by histidine 147 and histidine 151. Residues 169 to 173 (LISGG) and aspartate 202 each bind substrate. An N6-acetyllysine modification is found at lysine 203. 2 residues coordinate substrate: glycine 222 and glutamate 226. N6-acetyllysine is present on residues lysine 230 and lysine 299. Substrate-binding positions include 329-330 (SN) and threonine 357. Position 358 (aspartate 358) interacts with a divalent metal cation.

It belongs to the KAE1 / TsaD family. Monomer. Requires a divalent metal cation as cofactor.

It is found in the mitochondrion. The enzyme catalyses L-threonylcarbamoyladenylate + adenosine(37) in tRNA = N(6)-L-threonylcarbamoyladenosine(37) in tRNA + AMP + H(+). Its function is as follows. Required for the formation of a threonylcarbamoyl group on adenosine at position 37 (t(6)A37) in mitochondrial tRNAs that read codons beginning with adenine. Probably involved in the transfer of the threonylcarbamoyl moiety of threonylcarbamoyl-AMP (TC-AMP) to the N6 group of A37. Involved in mitochondrial genome maintenance. The protein is tRNA N6-adenosine threonylcarbamoyltransferase, mitochondrial of Rattus norvegicus (Rat).